The chain runs to 271 residues: Type III pantothenate kinase (271 aa).

6 to 13 (DVRNTHTV) is an ATP binding site. 109-112 (GADR) is a substrate binding site. The Proton acceptor role is filled by aspartate 111. Residue aspartate 131 coordinates K(+). Serine 134 is a binding site for ATP. Substrate is bound at residue threonine 186.

Belongs to the type III pantothenate kinase family. As to quaternary structure, homodimer. Requires NH4(+) as cofactor. The cofactor is K(+).

It is found in the cytoplasm. It carries out the reaction (R)-pantothenate + ATP = (R)-4'-phosphopantothenate + ADP + H(+). It functions in the pathway cofactor biosynthesis; coenzyme A biosynthesis; CoA from (R)-pantothenate: step 1/5. Functionally, catalyzes the phosphorylation of pantothenate (Pan), the first step in CoA biosynthesis. This Mycolicibacterium vanbaalenii (strain DSM 7251 / JCM 13017 / BCRC 16820 / KCTC 9966 / NRRL B-24157 / PYR-1) (Mycobacterium vanbaalenii) protein is Type III pantothenate kinase.